A 216-amino-acid chain; its full sequence is Ceramide-1-phosphate transfer protein (216 aa).

The an N-acylsphingoid base 1-phosphate site is built by Asp-56, Lys-60, Arg-108, Arg-112, and His-152.

Belongs to the GLTP family.

It localises to the cytoplasm. The protein resides in the cytosol. It is found in the golgi apparatus. The protein localises to the trans-Golgi network membrane. Its subcellular location is the cell membrane. It localises to the endosome membrane. The protein resides in the nucleus outer membrane. The enzyme catalyses N-(hexadecanoyl)-sphing-4-enine-1-phosphate(in) = N-(hexadecanoyl)-sphing-4-enine-1-phosphate(out). It carries out the reaction N-(9Z-octadecenoyl)-sphing-4-enine-1-phosphate(in) = N-(9Z-octadecenoyl)-sphing-4-enine-1-phosphate(out). In terms of biological role, mediates the intracellular transfer of ceramide-1-phosphate (C1P) between organelle membranes and the cell membrane. Required for normal structure of the Golgi stacks. Can bind phosphoceramides with a variety of aliphatic chains, but has a preference for lipids with saturated C16:0 or monounsaturated C18:1 aliphatic chains, and is inefficient with phosphoceramides containing lignoceryl (C24:0). Plays a role in the regulation of the cellular levels of ceramide-1-phosphate, and thereby contributes to the regulation of phospholipase PLA2G4A activity and the release of arachidonic acid. Has no activity with galactosylceramide, lactosylceramide, sphingomyelin, phosphatidylcholine, phosphatidic acid and ceramide. C1P transfer is stimulated by phosphatidylserine in C1P source vesicles. Regulates autophagy, inflammasome mediated IL1B and IL18 processing, and pyroptosis, but not apoptosis. The sequence is that of Ceramide-1-phosphate transfer protein (Cptp) from Rattus norvegicus (Rat).